The primary structure comprises 160 residues: Putative UPF0479 protein YBL113W-A (160 aa).

A run of 2 helical transmembrane segments spans residues 39–59 (IVFC…KVLQ) and 136–156 (VPMI…ISQH).

This sequence belongs to the UPF0479 family.

It is found in the membrane. The chain is Putative UPF0479 protein YBL113W-A from Saccharomyces cerevisiae (strain ATCC 204508 / S288c) (Baker's yeast).